Here is an 89-residue protein sequence, read N- to C-terminus: MALSKERKNEIIAEYATKQGDTGSPEVQVAVLTEQINTLNDHLRTHKKDHHSRRGLLKMVGRRRNLLTYLRNKDVTRYRELIQRLGLRR.

It belongs to the universal ribosomal protein uS15 family. As to quaternary structure, part of the 30S ribosomal subunit. Forms a bridge to the 50S subunit in the 70S ribosome, contacting the 23S rRNA.

Functionally, one of the primary rRNA binding proteins, it binds directly to 16S rRNA where it helps nucleate assembly of the platform of the 30S subunit by binding and bridging several RNA helices of the 16S rRNA. Forms an intersubunit bridge (bridge B4) with the 23S rRNA of the 50S subunit in the ribosome. This Exiguobacterium sp. (strain ATCC BAA-1283 / AT1b) protein is Small ribosomal subunit protein uS15.